The primary structure comprises 470 residues: MRSLFFLFIVHLLALGSGKAVFKNGVSQRTFREIKEEIANYEDVAKAIINLAVYGKYQNRSYERLGLLVDTVGPRLSGSKNLEKAIQIMYQNLQQDGLENVHLEQVRIPHWERGEESAVMLEPRIHKMAILGLGSSIGTPPGGITAEVLVVASFDELQRRASEARGKIIVYNQPYTGYEKTVQYRVQGAVEAAKVGAVASLIQSVASFSIYSPHTGIQKYQDGVPKIPTACITVEDAEMMSRMASRGNKIVIHLEMGAKTYPDTDSFNTVAEITGSMYPEEVVLVSGHLDSWDVGQGALDDGGGAFISWEALSLVKDLGLRPKRTLRLVLWTAEEQGGIGASQYYELHKANISKYSLVMEADSGTFLPTGLQFTGSDKARAIMKEVMNLLQPLNVTKVFSNGEGTDINFWIQAGVPGASLRDDLYKYFFFHHSHGDTMTVMDPKQMNVAAAVWAVVAYVVADMDEMLPRS.

A signal peptide spans 1–18; sequence MRSLFFLFIVHLLALGSG. A propeptide spanning residues 19–42 is cleaved from the precursor; that stretch reads KAVFKNGVSQRTFREIKEEIANYE. Asn59 carries an N-linked (GlcNAc...) asparagine glycan. 2 residues coordinate Zn(2+): His288 and Asp300. Glu334 acts as the Nucleophile in catalysis. Zn(2+) is bound at residue Glu335. An N-linked (GlcNAc...) asparagine glycan is attached at Asn351. Asp362 is a binding site for Zn(2+). Residue Asn394 is glycosylated (N-linked (GlcNAc...) asparagine). His432 provides a ligand contact to Zn(2+).

The protein belongs to the peptidase M28 family. As to quaternary structure, homodimer. The monomeric form is inactive while the homodimer is active. N-glycosylated. The secreted form is modified by hybrid or complex type oligosaccharide chains.

Its subcellular location is the endoplasmic reticulum. The protein resides in the golgi apparatus. The protein localises to the lysosome. It is found in the secreted. In terms of biological role, carboxypeptidase that may play an important role in the hydrolysis of circulating peptides. Catalyzes the hydrolysis of dipeptides with unsubstituted terminals into amino acids. May play a role in the liberation of thyroxine hormone from its thyroglobulin (Tg) precursor. In Mus musculus (Mouse), this protein is Carboxypeptidase Q (Cpq).